The chain runs to 268 residues: Undecaprenyl-diphosphatase (268 aa).

7 helical membrane-spanning segments follow: residues 47–67 (FAVL…FSKL), 85–105 (IGVL…GGLI), 109–129 (LFNP…LLWV), 144–164 (FPLP…FPGV), 184–204 (AAEF…VYDL), 217–237 (LIVA…VKTF), and 246–266 (FALF…ALAL).

This sequence belongs to the UppP family.

The protein localises to the cell inner membrane. It catalyses the reaction di-trans,octa-cis-undecaprenyl diphosphate + H2O = di-trans,octa-cis-undecaprenyl phosphate + phosphate + H(+). Catalyzes the dephosphorylation of undecaprenyl diphosphate (UPP). Confers resistance to bacitracin. This Rhodopseudomonas palustris (strain BisA53) protein is Undecaprenyl-diphosphatase.